We begin with the raw amino-acid sequence, 248 residues long: UPF0736 protein BCG9842_B4111 (248 aa).

This sequence belongs to the UPF0736 family.

The polypeptide is UPF0736 protein BCG9842_B4111 (Bacillus cereus (strain G9842)).